Consider the following 624-residue polypeptide: ADP,ATP carrier protein 1, chloroplastic (624 aa).

The transit peptide at M1 to K79 directs the protein to the chloroplast. Position 80 is an N-acetylalanine (A80). 6 helical membrane passes run V108–F128, A182–M202, L240–F260, A315–N335, L446–V466, and L545–A565. The tract at residues S579 to L624 is disordered. Low complexity predominate over residues E602–L624.

It belongs to the ADP/ATP translocase tlc (TC 2.A.12.2) family.

It localises to the plastid. The protein resides in the chloroplast membrane. In terms of biological role, may function as an ATP importer. The polypeptide is ADP,ATP carrier protein 1, chloroplastic (AATP1) (Arabidopsis thaliana (Mouse-ear cress)).